Consider the following 286-residue polypeptide: Diaminopimelate epimerase (286 aa).

Substrate contacts are provided by Asn22, Gln56, and Asn76. The active-site Proton donor is the Cys85. Substrate is bound by residues 86 to 87 (GN), Asn169, Asn202, and 220 to 221 (ER). Catalysis depends on Cys229, which acts as the Proton acceptor. Substrate is bound at residue 230-231 (GS).

The protein belongs to the diaminopimelate epimerase family. In terms of assembly, homodimer.

The protein resides in the cytoplasm. It catalyses the reaction (2S,6S)-2,6-diaminopimelate = meso-2,6-diaminopimelate. The protein operates within amino-acid biosynthesis; L-lysine biosynthesis via DAP pathway; DL-2,6-diaminopimelate from LL-2,6-diaminopimelate: step 1/1. Its function is as follows. Catalyzes the stereoinversion of LL-2,6-diaminopimelate (L,L-DAP) to meso-diaminopimelate (meso-DAP), a precursor of L-lysine and an essential component of the bacterial peptidoglycan. The sequence is that of Diaminopimelate epimerase from Buchnera aphidicola subsp. Baizongia pistaciae (strain Bp).